The sequence spans 427 residues: MDLLQQLQNQLNQFPSHTKLLLGFSGGLDSTVLLSLLAKLRKKQPHLSLRAIHIHHGLSQNADNWAIHCRQICQQLDISFLCEKVTINPRKGIEADAREARYQAIANHLQDNEILVTAHHQQDQTETFLLALKRGSGLQGLGAMQIQSVVFNLPIFRPLLHCTRQQLEQYAKTEKLSWIEDESNADNRYDRNFLRNDILPKLRQRWQHIDKAIQRSAQHCFEQQQLINELLNDEFNKIYDKFDRTLSIANFATYSILKQKALLRTWLQHLHILMPSTIQLDNIMRNMIQAQEDRNPTCKLGNQVLRRYQKRLYATPILQDLSHIRLDIQANECINLPDNLGEICLLTKNEHLQVTWQDKQILLPLTQEKIEIRFRYSGKVKLPQGFHQEMKKCWQDHNVPIWQRTRIPLIFYGDTFKSAVGFFDNFE.

Position 25–30 (25–30 (SGGLDS)) interacts with ATP.

This sequence belongs to the tRNA(Ile)-lysidine synthase family.

The protein localises to the cytoplasm. The catalysed reaction is cytidine(34) in tRNA(Ile2) + L-lysine + ATP = lysidine(34) in tRNA(Ile2) + AMP + diphosphate + H(+). In terms of biological role, ligates lysine onto the cytidine present at position 34 of the AUA codon-specific tRNA(Ile) that contains the anticodon CAU, in an ATP-dependent manner. Cytidine is converted to lysidine, thus changing the amino acid specificity of the tRNA from methionine to isoleucine. This is tRNA(Ile)-lysidine synthase from Histophilus somni (strain 129Pt) (Haemophilus somnus).